The sequence spans 461 residues: Fumarate hydratase class II (461 aa).

Residues 98–100 (SGT), 129–132 (HPND), 139–141 (SSN), and Thr187 contribute to the substrate site. Residues 120-140 (SKKGGKSPVHPNDHVNKGQSS) are disordered. The active-site Proton donor/acceptor is the His188. Residue Ser318 is part of the active site. Substrate-binding positions include Ser319 and 324–326 (KVN).

It belongs to the class-II fumarase/aspartase family. Fumarase subfamily. Homotetramer.

Its subcellular location is the cytoplasm. The catalysed reaction is (S)-malate = fumarate + H2O. Its pathway is carbohydrate metabolism; tricarboxylic acid cycle; (S)-malate from fumarate: step 1/1. Functionally, involved in the TCA cycle. Catalyzes the stereospecific interconversion of fumarate to L-malate. In Rickettsia felis (strain ATCC VR-1525 / URRWXCal2) (Rickettsia azadi), this protein is Fumarate hydratase class II.